Consider the following 255-residue polypeptide: 5-oxoprolinase subunit A (255 aa).

This sequence belongs to the LamB/PxpA family. Forms a complex composed of PxpA, PxpB and PxpC.

The enzyme catalyses 5-oxo-L-proline + ATP + 2 H2O = L-glutamate + ADP + phosphate + H(+). In terms of biological role, catalyzes the cleavage of 5-oxoproline to form L-glutamate coupled to the hydrolysis of ATP to ADP and inorganic phosphate. The sequence is that of 5-oxoprolinase subunit A from Thermococcus sibiricus (strain DSM 12597 / MM 739).